Here is a 221-residue protein sequence, read N- to C-terminus: MCPLRSLLLLSTLVLLHHLPHLSLGRSLPPTTAGPGRSCLNYSQNLLRAVSDTLQKARQTLEFYSCTSEEIDHEDITKDKTSTVEACLPLELATNESCLVSRETSLITHGSCLASGKTSFMTTLCLKSIYEDLKMYHMEFQAMNAKLLMDPKRQIFLDQNMLAAIAELMQALNFNSETVPQKPSLEEMDFYKTKVKLCILLHAFRIRAVTIDRMMSYLSSS.

The N-terminal stretch at 1-25 (MCPLRSLLLLSTLVLLHHLPHLSLG) is a signal peptide. 3 disulfide bridges follow: C39–C112, C66–C198, and C87–C125. Residues N41 and N95 are each glycosylated (N-linked (GlcNAc...) asparagine).

Belongs to the IL-6 superfamily. In terms of assembly, heterodimer with IL12B; disulfide-linked. This heterodimer is known as interleukin IL-12. Heterodimer with EBI3/IL27B; not disulfide-linked. This heterodimer is known as interleukin IL-35. Interacts with NBR1; this interaction promotes IL-12 secretion.

It localises to the secreted. Functionally, heterodimerizes with IL12B to form the IL-12 cytokine or with EBI3/IL27B to form the IL-35 cytokine. IL-12 is primarily produced by professional antigen-presenting cells (APCs) such as B-cells and dendritic cells (DCs) as well as macrophages and granulocytes and regulates T-cell and natural killer-cell responses, induces the production of interferon-gamma (IFN-gamma), favors the differentiation of T-helper 1 (Th1) cells and is an important link between innate resistance and adaptive immunity. Mechanistically, exerts its biological effects through a receptor composed of IL12R1 and IL12R2 subunits. Binding to the receptor results in the rapid tyrosine phosphorylation of a number of cellular substrates including the JAK family kinases TYK2 and JAK2. In turn, recruited STAT4 gets phosphorylated and translocates to the nucleus where it regulates cytokine/growth factor responsive genes. As part of IL-35, plays essential roles in maintaining the immune homeostasis of the liver microenvironment and also functions as an immune-suppressive cytokine. Mediates biological events through unconventional receptors composed of IL12RB2 and gp130/IL6ST heterodimers or homodimers. Signaling requires the transcription factors STAT1 and STAT4, which form a unique heterodimer that binds to distinct DNA sites. In Cervus elaphus (Red deer), this protein is Interleukin-12 subunit alpha (IL12A).